The chain runs to 211 residues: Allatostatins MIP (211 aa).

The first 24 residues, 1-24, serve as a signal peptide directing secretion; sequence MAHTKTRRTYGFLMVLLILGSACG. Residues 25–63 constitute a propeptide that is removed on maturation; the sequence is NLVASGSAGSPPSNEPGGGGLSEQVVLDQLSESDLYGNN. Tryptophan 74 carries the tryptophan amide modification. A propeptide spanning residues 78–148 is cleaved from the precursor; that stretch reads SSSGDVSDPD…DDLAGEPDVE (71 aa). A compositionally biased stretch (low complexity) spans 115-135; it reads ASGQSAQQQQQQPLQQQSQSG. The tract at residues 115-142 is disordered; the sequence is ASGQSAQQQQQQPLQQQSQSGEDFDDLA. A tryptophan amide mark is found at tryptophan 159, tryptophan 175, tryptophan 189, and tryptophan 202. The tract at residues 168-190 is disordered; sequence WNKFRGAWGKREPTWNNLKGMWG. Positions 206–211 are excised as a propeptide; sequence SQLPSN.

In larvae, strongly expressed in the midgut region before and in between the copper cells, and in a group of cells in the posterior part of the larval midgut. Expressed in the neurons of many areas including the subesophageal ganglion/tritocerebrum (SOG), olfactory glomeruli, lateral ventral protocerebrum, mushroom body, the optic lobe medulla and in the antennal lobes.

The protein localises to the secreted. Ligand for the sex peptide receptor (SPR). Stabilizes sleep and maintains sleep homeostasis to inhibit the activity of wake-promoting circuits, such as those that involve the pigment dispersing factor (pdf) neurons. Regulated by the circadian clock network and pathways associated with a sleep homeostat. May also have a regulatory role in gut motility. In Drosophila melanogaster (Fruit fly), this protein is Allatostatins MIP (Mip).